A 347-amino-acid polypeptide reads, in one-letter code: S-adenosylmethionine:tRNA ribosyltransferase-isomerase (347 aa).

Belongs to the QueA family. Monomer.

Its subcellular location is the cytoplasm. The catalysed reaction is 7-aminomethyl-7-carbaguanosine(34) in tRNA + S-adenosyl-L-methionine = epoxyqueuosine(34) in tRNA + adenine + L-methionine + 2 H(+). It participates in tRNA modification; tRNA-queuosine biosynthesis. Its function is as follows. Transfers and isomerizes the ribose moiety from AdoMet to the 7-aminomethyl group of 7-deazaguanine (preQ1-tRNA) to give epoxyqueuosine (oQ-tRNA). The sequence is that of S-adenosylmethionine:tRNA ribosyltransferase-isomerase from Pseudomonas aeruginosa (strain ATCC 15692 / DSM 22644 / CIP 104116 / JCM 14847 / LMG 12228 / 1C / PRS 101 / PAO1).